Here is a 209-residue protein sequence, read N- to C-terminus: MLELFPSEDVSPLYFEQRLSRQGYRRIAGIDEAGRGPLAGPVVAAAVVLPPVFDLPGLNDSKKISAKLREKLFPQIRRQALDYGIGLASAQEVDGLNVLQATLLAMRRALDRLAQPADYLLVDGITPVPLPLPQKTLKQGDSRSLSIAAASVLAKVVRDRLMTTYDARFPEYGFAGHKGYGSAAHRAAIARLGPCPLHRATFRGVREYL.

Residues Arg25 to Leu209 enclose the RNase H type-2 domain. The a divalent metal cation site is built by Asp31, Glu32, and Asp123.

The protein belongs to the RNase HII family. It depends on Mn(2+) as a cofactor. Mg(2+) is required as a cofactor.

It localises to the cytoplasm. It catalyses the reaction Endonucleolytic cleavage to 5'-phosphomonoester.. Its function is as follows. Endonuclease that specifically degrades the RNA of RNA-DNA hybrids. In Syntrophotalea carbinolica (strain DSM 2380 / NBRC 103641 / GraBd1) (Pelobacter carbinolicus), this protein is Ribonuclease HII.